The sequence spans 72 residues: Light-harvesting polypeptide B-885 alpha-1 chain (72 aa).

The Cytoplasmic segment spans residues 1–16; that stretch reads SAPAQWKLWLVMDPRT. Residues 17–37 traverse the membrane as a helical segment; the sequence is VMIGTAAWLGVLALLIHFLLL. Residue His-33 participates in a bacteriochlorophyll binding. Topologically, residues 38–72 are periplasmic; sequence GTERFNWIDTGLKEQKATAAAQAAITPAPVTAAAK.

It belongs to the antenna complex alpha subunit family. In terms of assembly, the core complex is formed by different alpha and beta chains, binding bacteriochlorophyll molecules, and arranged most probably in tetrameric structures disposed around the reaction center. The non-pigmented gamma chains may constitute additional components.

Its subcellular location is the cell inner membrane. Antenna complexes are light-harvesting systems, which transfer the excitation energy to the reaction centers. The chain is Light-harvesting polypeptide B-885 alpha-1 chain from Rhodocyclus tenuis (Rhodospirillum tenue).